Consider the following 511-residue polypeptide: Glucans biosynthesis protein G (511 aa).

A signal peptide spans 1–22; sequence MMKMRWLGAAIMLTLYASSSWA.

The protein belongs to the OpgD/OpgG family.

It is found in the periplasm. Its pathway is glycan metabolism; osmoregulated periplasmic glucan (OPG) biosynthesis. Functionally, involved in the biosynthesis of osmoregulated periplasmic glucans (OPGs). The polypeptide is Glucans biosynthesis protein G (Salmonella paratyphi A (strain ATCC 9150 / SARB42)).